Here is a 277-residue protein sequence, read N- to C-terminus: Urease accessory protein UreD (277 aa).

It belongs to the UreD family. UreD, UreF and UreG form a complex that acts as a GTP-hydrolysis-dependent molecular chaperone, activating the urease apoprotein by helping to assemble the nickel containing metallocenter of UreC. The UreE protein probably delivers the nickel.

Its subcellular location is the cytoplasm. Its function is as follows. Required for maturation of urease via the functional incorporation of the urease nickel metallocenter. The protein is Urease accessory protein UreD of Yersinia pestis bv. Antiqua (strain Antiqua).